A 220-amino-acid polypeptide reads, in one-letter code: Protein DGCR6 (220 aa).

Residues lysine 76–valine 142 adopt a coiled-coil conformation.

Belongs to the gonadal family. Found in all tissues examined with highest expression in liver, heart and skeletal muscle. Lower levels in pancreas and placenta. Weak expression in brain.

The protein localises to the nucleus. In terms of biological role, may play a role in neural crest cell migration into the third and fourth pharyngeal pouches. This chain is Protein DGCR6 (DGCR6), found in Homo sapiens (Human).